We begin with the raw amino-acid sequence, 110 residues long: Large ribosomal subunit protein uL22 (110 aa).

It belongs to the universal ribosomal protein uL22 family. Part of the 50S ribosomal subunit.

Its function is as follows. This protein binds specifically to 23S rRNA; its binding is stimulated by other ribosomal proteins, e.g. L4, L17, and L20. It is important during the early stages of 50S assembly. It makes multiple contacts with different domains of the 23S rRNA in the assembled 50S subunit and ribosome. In terms of biological role, the globular domain of the protein is located near the polypeptide exit tunnel on the outside of the subunit, while an extended beta-hairpin is found that lines the wall of the exit tunnel in the center of the 70S ribosome. This is Large ribosomal subunit protein uL22 from Salmonella arizonae (strain ATCC BAA-731 / CDC346-86 / RSK2980).